Consider the following 1483-residue polypeptide: Heme-responsive zinc finger transcription factor HAP1 (1483 aa).

A compositionally biased stretch (polar residues) spans 1–50 (MSNTPYNSSVPSIASMTQSSVSRSPNMHTATTPGANTSSNSPPLHMSSDS). The segment at 1 to 56 (MSNTPYNSSVPSIASMTQSSVSRSPNMHTATTPGANTSSNSPPLHMSSDSSKIKRK) is disordered. Residues cysteine 64, cysteine 67, cysteine 74, cysteine 81, cysteine 84, and cysteine 93 each contribute to the Zn(2+) site. A DNA-binding region (zn(2)-C6 fungal-type) is located at residues 64–93 (CTICRKRKVKCDKLRPHCQQCTKTGVAHLC). Residues 105 to 134 (EKELLKDNELKKLRERVKSLEKTLSKVHSS) are a coiled coil. Residues 162 to 176 (VNANTGSASSASHMH) show a composition bias toward polar residues. Residues 162–208 (VNANTGSASSASHMHQQQQQQQQQEQQQDFSRSANANANSSSLSISN) form a disordered region. Over residues 177–208 (QQQQQQQQQEQQQDFSRSANANANSSSLSISN) the composition is skewed to low complexity. The interval 244 to 444 (KGDPYLKLLW…NTIPHHQPQS (201 aa)) is heme-responsive; required for HMC formation. 6 HRM repeats span residues 280–285 (KCPINH), 299–304 (KCPVDH), 323–328 (KCPVDH), 347–352 (RCPVDH), 389–394 (KCPVDH), and 415–420 (RCPIDH). Composition is skewed to polar residues over residues 432–447 (STHN…SGSH) and 706–734 (QLNA…NPTL). Disordered stretches follow at residues 432-458 (STHN…NRKH) and 706-767 (QLNA…KENQ). Residues 735–759 (NNNMSAATTNSSSRSGSADSRSGSN) show a composition bias toward low complexity. One copy of the HRM 7 repeat lies at 1192–1197 (KCPVYQ). Positions 1384 to 1411 (TANTDTSANGSALSTLTSPQGSDLASNS) are disordered. Residues 1388-1411 (DTSANGSALSTLTSPQGSDLASNS) show a composition bias toward polar residues.

In terms of assembly, binds DNA as a homodimer. Interacts with SRO9 and YDJ1. In the absence of heme, binds to at least four cellular proteins, including YDJ1 and SRO9, forming a high-molecular-weight complex (HMC) which results in repression of its activity and dictates its DNA-binding specificity.

The protein localises to the nucleus. Functionally, regulation of oxygen dependent gene expression. It modulates the expression of Iso-1 (CYP1) and Iso-2 (CYP3) cytochrome c. In response to heme, promotes transcription of genes encoding functions required for respiration, controlling oxidative damage and repression of anaerobic genes. Binds to the sequence 5'-CGGNNNTNNCGG-3'. The chain is Heme-responsive zinc finger transcription factor HAP1 (HAP1) from Saccharomyces cerevisiae (strain RM11-1a) (Baker's yeast).